A 224-amino-acid polypeptide reads, in one-letter code: Endoplasmic reticulum vesicle protein 25 (224 aa).

An N-terminal signal peptide occupies residues 1-25; that stretch reads MIPPRSLGSTAALLLVLLFTTLASA. Topologically, residues 26–190 are lumenal; the sequence is IKFDLPSNAH…ADTNLSTNMR (165 aa). Residues 38–131 form the GOLD domain; that stretch reads TKCIWNYALS…IPVVTIDLDV (94 aa). The chain crosses the membrane as a helical span at residues 191–211; the sequence is VTNFAILTLIALIALGVWQVF. Residues 212–224 lie on the Cytoplasmic side of the membrane; it reads HLRGFFKRKYLID.

Belongs to the EMP24/GP25L family.

Its subcellular location is the endoplasmic reticulum membrane. It is found in the golgi apparatus membrane. Constituent of COPII-coated endoplasmic reticulum-derived transport vesicles. Required for efficient transport of a subset of secretory proteins to the Golgi. Facilitates retrograde transport from the Golgi to the endoplasmic reticulum. The protein is Endoplasmic reticulum vesicle protein 25 (ERV25) of Mycosarcoma maydis (Corn smut fungus).